A 285-amino-acid polypeptide reads, in one-letter code: 4-diphosphocytidyl-2-C-methyl-D-erythritol kinase (285 aa).

Residue K12 is part of the active site. 95 to 105 serves as a coordination point for ATP; the sequence is PMGGGVGGGSS. The active site involves D137.

It belongs to the GHMP kinase family. IspE subfamily.

It carries out the reaction 4-CDP-2-C-methyl-D-erythritol + ATP = 4-CDP-2-C-methyl-D-erythritol 2-phosphate + ADP + H(+). It participates in isoprenoid biosynthesis; isopentenyl diphosphate biosynthesis via DXP pathway; isopentenyl diphosphate from 1-deoxy-D-xylulose 5-phosphate: step 3/6. In terms of biological role, catalyzes the phosphorylation of the position 2 hydroxy group of 4-diphosphocytidyl-2C-methyl-D-erythritol. The chain is 4-diphosphocytidyl-2-C-methyl-D-erythritol kinase from Actinobacillus pleuropneumoniae serotype 7 (strain AP76).